Here is a 180-residue protein sequence, read N- to C-terminus: Cytokinin-beta-glucosidase 1 (180 aa).

Its function is as follows. Hydrolyzes cytokinin glucosides thus liberating free cytokinins. In Panax ginseng (Korean ginseng), this protein is Cytokinin-beta-glucosidase 1 (ROLC1).